The following is a 245-amino-acid chain: Leucyl/phenylalanyl-tRNA--protein transferase (245 aa).

Belongs to the L/F-transferase family.

The protein localises to the cytoplasm. It catalyses the reaction N-terminal L-lysyl-[protein] + L-leucyl-tRNA(Leu) = N-terminal L-leucyl-L-lysyl-[protein] + tRNA(Leu) + H(+). The catalysed reaction is N-terminal L-arginyl-[protein] + L-leucyl-tRNA(Leu) = N-terminal L-leucyl-L-arginyl-[protein] + tRNA(Leu) + H(+). The enzyme catalyses L-phenylalanyl-tRNA(Phe) + an N-terminal L-alpha-aminoacyl-[protein] = an N-terminal L-phenylalanyl-L-alpha-aminoacyl-[protein] + tRNA(Phe). Its function is as follows. Functions in the N-end rule pathway of protein degradation where it conjugates Leu, Phe and, less efficiently, Met from aminoacyl-tRNAs to the N-termini of proteins containing an N-terminal arginine or lysine. In Paraburkholderia phytofirmans (strain DSM 17436 / LMG 22146 / PsJN) (Burkholderia phytofirmans), this protein is Leucyl/phenylalanyl-tRNA--protein transferase.